Reading from the N-terminus, the 663-residue chain is Translation factor GUF1 homolog, mitochondrial (663 aa).

A mitochondrion-targeting transit peptide spans 1–33; that stretch reads MAGAAALRRSARRVVLPGAYALSRALQHPERLL. One can recognise a tr-type G domain in the interval 55 to 247; that stretch reads ERVRNFSIIA…AVIERIPSPP (193 aa). Residues 64–71, 140–144, and 194–197 contribute to the GTP site; these read AHVDHGKS, DTPGH, and NKID.

The protein belongs to the TRAFAC class translation factor GTPase superfamily. Classic translation factor GTPase family. LepA subfamily.

The protein localises to the mitochondrion inner membrane. The enzyme catalyses GTP + H2O = GDP + phosphate + H(+). Its function is as follows. Promotes mitochondrial protein synthesis. May act as a fidelity factor of the translation reaction, by catalyzing a one-codon backward translocation of tRNAs on improperly translocated ribosomes. Binds to mitochondrial ribosomes in a GTP-dependent manner. The sequence is that of Translation factor GUF1 homolog, mitochondrial from Oryza sativa subsp. japonica (Rice).